A 439-amino-acid polypeptide reads, in one-letter code: ATP-dependent RNA helicase RhlB (439 aa).

The short motif at 9 to 37 (QKFADLPLHPEVKQALAENGFEFCTPIQA) is the Q motif element. Positions 40–219 (LPVLLQSKDI…YDHMNEPVKV (180 aa)) constitute a Helicase ATP-binding domain. 53-60 (AQTGTGKT) is an ATP binding site. The DEAD box motif lies at 165–168 (DEAD). Residues 243 to 390 (KMRLLLTLIE…VSNYDRDALL (148 aa)) form the Helicase C-terminal domain. The segment at 395-439 (PPVKIHRRHPAGARNLRERSGAGRPQGAHRSGGRPPRHDRTRRQP) is disordered. Over residues 425–439 (SGGRPPRHDRTRRQP) the composition is skewed to basic residues.

It belongs to the DEAD box helicase family. RhlB subfamily. Component of the RNA degradosome, which is a multiprotein complex involved in RNA processing and mRNA degradation.

The protein localises to the cytoplasm. It carries out the reaction ATP + H2O = ADP + phosphate + H(+). Its function is as follows. DEAD-box RNA helicase involved in RNA degradation. Has RNA-dependent ATPase activity and unwinds double-stranded RNA. This is ATP-dependent RNA helicase RhlB from Shewanella sp. (strain ANA-3).